Here is a 296-residue protein sequence, read N- to C-terminus: Protoheme IX farnesyltransferase (296 aa).

The Cytoplasmic portion of the chain corresponds to 1–9; sequence MMFKQYLQV. The chain crosses the membrane as a helical span at residues 10–28; sequence TKPGIIFGNLISVIGGFLL. Residues 29 to 37 lie on the Periplasmic side of the membrane; sequence ASKGSIDYP. Residues 38–56 traverse the membrane as a helical segment; it reads LFIYTLVGVSLVVASGCVF. Topologically, residues 57-78 are cytoplasmic; sequence NNYIDRDIDRKMERTKNRVLVK. Residues 79-97 form a helical membrane-spanning segment; that stretch reads GLISPAVSLVYATLLGFAG. Over 98-107 the chain is Periplasmic; the sequence is FMLLWFGANP. A helical transmembrane segment spans residues 108–126; that stretch reads LACWLGVMGFVVYVGVYSL. Residues 127–197 are Cytoplasmic-facing; the sequence is YMKRHSVYGT…YQAANIPVLP (71 aa). A helical transmembrane segment spans residues 198–216; that stretch reads VVKGISVAKNHITLYIIAF. The Periplasmic segment spans residues 217-228; sequence AVATLMLSLGGY. The chain crosses the membrane as a helical span at residues 229–247; that stretch reads AGYKYLVVAAAVSVWWLGM. Over 248 to 268 the chain is Cytoplasmic; that stretch reads ALRGYKVADDRIWARKLFGFS. A helical membrane pass occupies residues 269-287; that stretch reads IIAITALSVMMSVDFMVPD. The Periplasmic segment spans residues 288 to 296; it reads SHTLLAAVW.

Belongs to the UbiA prenyltransferase family. Protoheme IX farnesyltransferase subfamily.

Its subcellular location is the cell inner membrane. The enzyme catalyses heme b + (2E,6E)-farnesyl diphosphate + H2O = Fe(II)-heme o + diphosphate. Its pathway is porphyrin-containing compound metabolism; heme O biosynthesis; heme O from protoheme: step 1/1. Functionally, converts heme B (protoheme IX) to heme O by substitution of the vinyl group on carbon 2 of heme B porphyrin ring with a hydroxyethyl farnesyl side group. The polypeptide is Protoheme IX farnesyltransferase (Shigella sonnei (strain Ss046)).